The chain runs to 382 residues: Sphingoid long-chain base transporter RSB1 (382 aa).

Residues 1–34 are Extracellular-facing; that stretch reads MSNATNNTLGSLLPQLEAAANSNSLYGGMVPNLR. N-linked (GlcNAc...) asparagine glycans are attached at residues Asn-3 and Asn-6. Residues 35 to 55 traverse the membrane as a helical segment; the sequence is FNITMIVIWGILLTIHVVQLL. At 56-57 the chain is on the cytoplasmic side; that stretch reads MR. Residues 58–78 traverse the membrane as a helical segment; that stretch reads QYWFSIAFICTGILEVLGFIG. Residues 79-90 lie on the Extracellular side of the membrane; it reads RTWSHSNVADMD. The helical transmembrane segment at 91-111 threads the bilayer; sequence AFLLNMICLTIAPVFTMGGIY. The Cytoplasmic segment spans residues 112–135; the sequence is YQLAKLIEVYGHRFSLLPSPMAYS. A helical membrane pass occupies residues 136–156; that stretch reads FIFICSDIVSLVVQAVGGGLC. Topologically, residues 157 to 171 are extracellular; that stretch reads GVAVTDGTSTTTGNH. Residues 172 to 192 traverse the membrane as a helical segment; it reads VFIAGLAIQVASMAIFLMLWF. Residues 193 to 241 are Cytoplasmic-facing; it reads HFLFRIYISVRWEHINSRPISLSLLKISQTEVDYLYREKFHFLRLEPKR. A helical transmembrane segment spans residues 242–262; sequence WVFHYFNLAITVAVLTIFTRC. At 263–281 the chain is on the extracellular side; it reads CYRLAELVVGWDGYLITHE. Residues 282–302 traverse the membrane as a helical segment; it reads WYFIILDALMMAIATVTLTIF. Topologically, residues 303-382 are cytoplasmic; the sequence is HPGFAFKGKS…LFSSKKKAKL (80 aa).

This sequence belongs to the lipid-translocating exporter (LTE) (TC 9.A.26.1) family.

It localises to the cell membrane. Functionally, catalyzes the ATP-dependent translocation of sphingoid long-chain bases (LCBs) from the cytoplasmic site toward the extracytoplasmic side of the membrane (flip-flop). Involved in the establishment of the functional lipid asymmetry of the plasma membrane. Regulates intracellular levels of LCBs, sphingolipid precursors that are growth inhibitory at increased levels. In Saccharomyces cerevisiae (strain JAY291) (Baker's yeast), this protein is Sphingoid long-chain base transporter RSB1 (RSB1).